A 109-amino-acid polypeptide reads, in one-letter code: Histidine-rich carboxyl terminus protein 1 (109 aa).

Residues 13–33 (WITGTALAFLMLLWLMALCLF) traverse the membrane as a helical segment. The segment at 77–109 (TSVGVHHHHHHSPHRLHHHKHHHRHHHAHGARR) is disordered. Residues 81 to 109 (VHHHHHHSPHRLHHHKHHHRHHHAHGARR) show a composition bias toward basic residues.

It localises to the membrane. The polypeptide is Histidine-rich carboxyl terminus protein 1 (Hrct1) (Mus musculus (Mouse)).